The following is a 369-amino-acid chain: Anhydro-N-acetylmuramic acid kinase (369 aa).

Position 12–19 (12–19 (GTSLDGVD)) interacts with ATP.

It belongs to the anhydro-N-acetylmuramic acid kinase family.

The enzyme catalyses 1,6-anhydro-N-acetyl-beta-muramate + ATP + H2O = N-acetyl-D-muramate 6-phosphate + ADP + H(+). The protein operates within amino-sugar metabolism; 1,6-anhydro-N-acetylmuramate degradation. It participates in cell wall biogenesis; peptidoglycan recycling. In terms of biological role, catalyzes the specific phosphorylation of 1,6-anhydro-N-acetylmuramic acid (anhMurNAc) with the simultaneous cleavage of the 1,6-anhydro ring, generating MurNAc-6-P. Is required for the utilization of anhMurNAc either imported from the medium or derived from its own cell wall murein, and thus plays a role in cell wall recycling. The sequence is that of Anhydro-N-acetylmuramic acid kinase from Escherichia coli O7:K1 (strain IAI39 / ExPEC).